Consider the following 53-residue polypeptide: ATP synthase protein 8 (53 aa).

A helical transmembrane segment spans residues 9 to 29 (WLILFFIFSITLVIFNILNYF).

Belongs to the ATPase protein 8 family. F-type ATPases have 2 components, CF(1) - the catalytic core - and CF(0) - the membrane proton channel.

The protein localises to the mitochondrion membrane. Mitochondrial membrane ATP synthase (F(1)F(0) ATP synthase or Complex V) produces ATP from ADP in the presence of a proton gradient across the membrane which is generated by electron transport complexes of the respiratory chain. F-type ATPases consist of two structural domains, F(1) - containing the extramembraneous catalytic core and F(0) - containing the membrane proton channel, linked together by a central stalk and a peripheral stalk. During catalysis, ATP synthesis in the catalytic domain of F(1) is coupled via a rotary mechanism of the central stalk subunits to proton translocation. Part of the complex F(0) domain. Minor subunit located with subunit a in the membrane. The sequence is that of ATP synthase protein 8 (mt:ATPase8) from Anopheles quadrimaculatus (Common malaria mosquito).